A 965-amino-acid chain; its full sequence is Inner tegument protein (965 aa).

Residues 489 to 965 (WDLNKFYVLS…KLEQSITGSF (477 aa)) form an interaction with large tegument protein region.

It belongs to the herpesviridae inner tegument protein family. Interacts (via C-terminus) with the large tegument protein/LTP (via N-terminus).

Its subcellular location is the virion tegument. It localises to the host cytoplasm. It is found in the host nucleus. The protein localises to the host Golgi apparatus. The protein resides in the host trans-Golgi network. Its function is as follows. Plays an essential role in cytoplasmic secondary envelopment during viral egress. Interacts with the capsid via the large tegument protein/LTP and participates in its transport to the host trans-Golgi network (TGN) where secondary envelopment occurs. Modulates tegumentation and capsid accumulation at the viral assembly complex. The protein is Inner tegument protein (63) of Equine herpesvirus 2 (strain 86/87) (EHV-2).